Consider the following 156-residue polypeptide: Putative pre-16S rRNA nuclease (156 aa).

The protein belongs to the YqgF nuclease family.

It is found in the cytoplasm. In terms of biological role, could be a nuclease involved in processing of the 5'-end of pre-16S rRNA. This is Putative pre-16S rRNA nuclease from Aromatoleum aromaticum (strain DSM 19018 / LMG 30748 / EbN1) (Azoarcus sp. (strain EbN1)).